We begin with the raw amino-acid sequence, 195 residues long: Probable GTP-binding protein EngB (195 aa).

One can recognise an EngB-type G domain in the interval 24–195 (ELPEIALAGR…EAWDAILEKL (172 aa)). GTP contacts are provided by residues 32 to 39 (GRSNVGKS), 59 to 63 (GKTQL), 77 to 80 (DVPG), 144 to 147 (TKAD), and 176 to 178 (FSS). Mg(2+) contacts are provided by Ser39 and Thr61.

Belongs to the TRAFAC class TrmE-Era-EngA-EngB-Septin-like GTPase superfamily. EngB GTPase family. Requires Mg(2+) as cofactor.

Necessary for normal cell division and for the maintenance of normal septation. This chain is Probable GTP-binding protein EngB, found in Streptococcus pneumoniae (strain ATCC 700669 / Spain 23F-1).